A 460-amino-acid chain; its full sequence is 5-hydroxytryptamine receptor 2C (460 aa).

Positions 1-32 (MVNLGNAVRSLLMHLIGLLVWQFDISISPVAA) are cleaved as a signal peptide. At 33-56 (IVTDTFNSSDGGRLFQFPDGVQNW) the chain is on the extracellular side. A helical membrane pass occupies residues 57–81 (PALSIVVIIIMTIGGNILVIMAVSM). Residues 82 to 87 (EKKLHN) lie on the Cytoplasmic side of the membrane. Residues 88-112 (ATNYFLMSLAIADMLVGLLVMPLSL) traverse the membrane as a helical segment. Residues 113–129 (LAILYDYVWPLPRYLCP) lie on the Extracellular side of the membrane. An intrachain disulfide couples C128 to C208. Residues 130-152 (VWISLDVLFSTASIMHLCAISLD) form a helical membrane-spanning segment. Residue T140 participates in ergotamine binding. The DRY motif; important for ligand-induced conformation changes signature appears at 152–154 (DRY). Over 153–168 (RYVAIRNPIEHSRFNS) the chain is Cytoplasmic. The chain crosses the membrane as a helical span at residues 169–190 (RTKAIMKIAIVWAISIGVSVPI). Over 191 to 214 (PVIGLRDESKVFVNNTTCVLNDPN) the chain is Extracellular. 2 N-linked (GlcNAc...) asparagine glycosylation sites follow: N204 and N205. L210 is a binding site for ergotamine. The chain crosses the membrane as a helical span at residues 215–237 (FVLIGSFVAFFIPLTIMVITYFL). The Cytoplasmic segment spans residues 238–313 (TIYVLRRQTL…AINNEKKASK (76 aa)). The disordered stretch occupies residues 276–301 (EEENAPNPNPDQKPRRKKKEKRPRGT). A compositionally biased stretch (basic residues) spans 289 to 299 (PRRKKKEKRPR). Residues 314 to 338 (VLGIVFFVFLIMWCPFFITNILSVL) form a helical membrane-spanning segment. An intrachain disulfide couples C339 to C343. The Extracellular segment spans residues 339-349 (CGKACNQKLME). Residues 350 to 372 (KLLNVFVWIGYVCSGINPLVYTL) traverse the membrane as a helical segment. The NPxxY motif; important for ligand-induced conformation changes and signaling signature appears at 366-370 (NPLVY). Residues 373–460 (FNKIYRRAFS…NVVSERISSV (88 aa)) are Cytoplasmic-facing. Positions 458–460 (SSV) match the PDZ-binding motif.

This sequence belongs to the G-protein coupled receptor 1 family. In terms of assembly, interacts with MPDZ. Interacts with ARRB2. Interacts with MPP3; this interaction stabilizes the receptor at the plasma membrane and prevents the desensitization of the HTR2C receptor-mediated calcium response.

It localises to the cell membrane. G-protein coupled receptor for 5-hydroxytryptamine (serotonin). Also functions as a receptor for various drugs and psychoactive substances, including ergot alkaloid derivatives, 1-2,5,-dimethoxy-4-iodophenyl-2-aminopropane (DOI) and lysergic acid diethylamide (LSD). Ligand binding causes a conformation change that triggers signaling via guanine nucleotide-binding proteins (G proteins) and modulates the activity of downstream effectors. HTR2C is coupled to G(q)/G(11) G alpha proteins and activates phospholipase C-beta, releasing diacylglycerol (DAG) and inositol 1,4,5-trisphosphate (IP3) second messengers that modulate the activity of phosphatidylinositol 3-kinase and promote the release of Ca(2+) ions from intracellular stores, respectively. Beta-arrestin family members inhibit signaling via G proteins and mediate activation of alternative signaling pathways. Regulates neuronal activity via the activation of short transient receptor potential calcium channels in the brain, and thereby modulates the activation of pro-opiomelanocortin neurons and the release of CRH that then regulates the release of corticosterone. Plays a role in the regulation of appetite and eating behavior, responses to anxiogenic stimuli and stress. Plays a role in insulin sensitivity and glucose homeostasis. This chain is 5-hydroxytryptamine receptor 2C, found in Rattus norvegicus (Rat).